A 187-amino-acid chain; its full sequence is Orotate phosphoribosyltransferase (187 aa).

5-phospho-alpha-D-ribose 1-diphosphate-binding positions include Arg98, Lys99, Lys102, His104, and 128–136 (EDVTTTGGS). Residues Thr132 and Arg160 each contribute to the orotate site.

Belongs to the purine/pyrimidine phosphoribosyltransferase family. PyrE subfamily. Homodimer. The cofactor is Mg(2+).

The enzyme catalyses orotidine 5'-phosphate + diphosphate = orotate + 5-phospho-alpha-D-ribose 1-diphosphate. The protein operates within pyrimidine metabolism; UMP biosynthesis via de novo pathway; UMP from orotate: step 1/2. Catalyzes the transfer of a ribosyl phosphate group from 5-phosphoribose 1-diphosphate to orotate, leading to the formation of orotidine monophosphate (OMP). This chain is Orotate phosphoribosyltransferase, found in Rhodopseudomonas palustris (strain TIE-1).